A 152-amino-acid polypeptide reads, in one-letter code: Nucleoside diphosphate kinase B (152 aa).

Residues Met1–Lys66 are interaction with AKAP13. Residues Lys12, Phe60, Arg88, Thr94, Arg105, and Asn115 each coordinate ATP. His118 acts as the Pros-phosphohistidine intermediate in catalysis.

It belongs to the NDK family. As to quaternary structure, hexamer of two different chains: An and B (A6, A5B, A4B2, A3B3, A2B4, AB5, B6). Interacts with CAPN8. Interacts with AKAP13. Interacts with ITGB1BP1 (via C-terminal domain region). Interacts with BCL2L10. Mg(2+) is required as a cofactor. As to expression, ubiquitous.

It localises to the cytoplasm. Its subcellular location is the cell projection. The protein resides in the lamellipodium. It is found in the ruffle. The protein localises to the nucleus. It carries out the reaction a 2'-deoxyribonucleoside 5'-diphosphate + ATP = a 2'-deoxyribonucleoside 5'-triphosphate + ADP. It catalyses the reaction a ribonucleoside 5'-diphosphate + ATP = a ribonucleoside 5'-triphosphate + ADP. The enzyme catalyses ATP + protein L-histidine = ADP + protein N-phospho-L-histidine.. Major role in the synthesis of nucleoside triphosphates other than ATP. The ATP gamma phosphate is transferred to the NDP beta phosphate via a ping-pong mechanism, using a phosphorylated active-site intermediate. Negatively regulates Rho activity by interacting with AKAP13/LBC. Acts as a transcriptional activator of the MYC gene; binds DNA non-specifically. Binds to both single-stranded guanine- and cytosine-rich strands within the nuclease hypersensitive element (NHE) III(1) region of the MYC gene promoter. Does not bind to duplex NHE III(1). Has G-quadruplex (G4) DNA-binding activity, which is independent of its nucleotide-binding and kinase activity. Binds both folded and unfolded G4 with similar low nanomolar affinities. Stabilizes folded G4s regardless of whether they are prefolded or not. Exhibits histidine protein kinase activity. The protein is Nucleoside diphosphate kinase B (NME2) of Canis lupus familiaris (Dog).